Here is a 291-residue protein sequence, read N- to C-terminus: METPGLVVHGEAAPFSTALRSLVNNPLYSDVRFVVGQERQEVFAHRCLLACRCNFFQRLLSSEPGPGVPSPVVLSTVPAEAFLAVLEFLYTNSAKLQRHSVLEVLTAAVEYGLEELRELCLEFVVKALDVELVCEALQVAVTFGLGQLQERCVAFIEAHSQETLRTRGFLELSAPALLPLLRSDKLCVDEAELVLAARSWARVGAAVLERPVAEVAAPVVRELRLALLAPAELSALEEQNRREPLIPVEQIVEAWKCHALRRGDAARGTPCRRRRGTLPREHHRFLDLPFK.

The BTB domain occupies 29–98 (SDVRFVVGQE…LYTNSAKLQR (70 aa)). The BACK domain maps to 134–234 (CEALQVAVTF…LALLAPAELS (101 aa)).

In Bos taurus (Bovine), this protein is BTB/POZ domain-containing protein 19 (BTBD19).